The following is a 293-amino-acid chain: UPF0282 protein MK0213 (293 aa).

It belongs to the UPF0282 family.

In Methanopyrus kandleri (strain AV19 / DSM 6324 / JCM 9639 / NBRC 100938), this protein is UPF0282 protein MK0213.